The sequence spans 154 residues: NADPH-dependent 7-cyano-7-deazaguanine reductase (154 aa).

Residues methionine 1 to glycine 13 show a composition bias toward polar residues. Residues methionine 1–valine 30 form a disordered region. Basic and acidic residues predominate over residues aspartate 17–leucine 27. Cysteine 52 functions as the Thioimide intermediate in the catalytic mechanism. Residue aspartate 59 is the Proton donor of the active site. Substrate contacts are provided by residues valine 74–serine 76 and histidine 93–glutamate 94.

Belongs to the GTP cyclohydrolase I family. QueF type 1 subfamily.

Its subcellular location is the cytoplasm. The enzyme catalyses 7-aminomethyl-7-carbaguanine + 2 NADP(+) = 7-cyano-7-deazaguanine + 2 NADPH + 3 H(+). Its pathway is tRNA modification; tRNA-queuosine biosynthesis. Its function is as follows. Catalyzes the NADPH-dependent reduction of 7-cyano-7-deazaguanine (preQ0) to 7-aminomethyl-7-deazaguanine (preQ1). The polypeptide is NADPH-dependent 7-cyano-7-deazaguanine reductase (Agrobacterium fabrum (strain C58 / ATCC 33970) (Agrobacterium tumefaciens (strain C58))).